Here is a 340-residue protein sequence, read N- to C-terminus: GTP 3',8-cyclase (340 aa).

Residues 8–227 form the Radical SAM core domain; sequence KLGRPIRDLR…TMIEQHFEID (220 aa). Arg-17 is a GTP binding site. Residues Cys-24 and Cys-28 each coordinate [4Fe-4S] cluster. S-adenosyl-L-methionine is bound at residue Tyr-30. Position 31 (Cys-31) interacts with [4Fe-4S] cluster. A GTP-binding site is contributed by Arg-71. Residue Gly-75 coordinates S-adenosyl-L-methionine. Thr-102 provides a ligand contact to GTP. Ser-126 is a binding site for S-adenosyl-L-methionine. Lys-163 is a binding site for GTP. Met-197 lines the S-adenosyl-L-methionine pocket. Positions 261 and 264 each coordinate [4Fe-4S] cluster. GTP is bound at residue 266 to 268; sequence RAR. Cys-278 serves as a coordination point for [4Fe-4S] cluster.

Belongs to the radical SAM superfamily. MoaA family. As to quaternary structure, monomer and homodimer. [4Fe-4S] cluster serves as cofactor.

The catalysed reaction is GTP + AH2 + S-adenosyl-L-methionine = (8S)-3',8-cyclo-7,8-dihydroguanosine 5'-triphosphate + 5'-deoxyadenosine + L-methionine + A + H(+). It participates in cofactor biosynthesis; molybdopterin biosynthesis. Functionally, catalyzes the cyclization of GTP to (8S)-3',8-cyclo-7,8-dihydroguanosine 5'-triphosphate. The chain is GTP 3',8-cyclase from Staphylococcus aureus (strain MRSA252).